We begin with the raw amino-acid sequence, 751 residues long: Cytosolic neutral trehalase (751 aa).

A compositionally biased stretch (polar residues) spans 1 to 10; it reads MSQVNTSQGP. Residues 1-59 form a disordered region; sequence MSQVNTSQGPVAQGRQRRLSSLSEFNDPFSNAEVYYGPPTDPRKQKQAKPAKINRTRTM. Position 2 is an N-acetylserine (serine 2). A phosphoserine; by PKA mark is found at serine 20 and serine 21. Serine 23 carries the post-translational modification Phosphoserine. The segment covering 45-55 has biased composition (basic residues); it reads QKQAKPAKINR. Phosphothreonine is present on threonine 58. Residue serine 60 is modified to Phosphoserine; by PKA. Serine 66 carries the phosphoserine modification. A disordered region spans residues 73-92; that stretch reads FGKLQQTRRGSEDDTYSSSQ. Serine 83 is modified (phosphoserine; by PKA). Ca(2+) contacts are provided by aspartate 114, aspartate 116, asparagine 118, glutamine 120, and aspartate 125. Substrate contacts are provided by residues arginine 302, 309 to 310, asparagine 346, 355 to 357, glutamate 424, arginine 473, and glycine 476; these read WD and RSQ. Active-site proton donor/acceptor residues include aspartate 478 and glutamate 674.

This sequence belongs to the glycosyl hydrolase 37 family. As to quaternary structure, monomer. Interacts with BMH1 dimers; the interaction is direct and activates NTH1. Interacts with BMH2. Ca(2+) is required as a cofactor. Phosphorylated by protein kinase A (PKA); phosphorylation at Ser-60 and Ser-83 is required for activation by the 14-3-3 proteins BMH1 and BMH2.

It is found in the cytoplasm. The enzyme catalyses alpha,alpha-trehalose + H2O = alpha-D-glucose + beta-D-glucose. Its pathway is carbohydrate degradation. Activated by calcium. Activated by protein kinase A (PKA)-mediated phosphorylation. Its function is as follows. Hydrolyzes intracellular trehalose to glucose. The disaccharide trehalose serves as a storage carbohydrate that is mobilized during nutrient stress. Regulates the level of trehalose as a protectant for cell integrity during heat stress. The chain is Cytosolic neutral trehalase from Saccharomyces cerevisiae (strain ATCC 204508 / S288c) (Baker's yeast).